The primary structure comprises 307 residues: NAD kinase (307 aa).

Asp-80 acts as the Proton acceptor in catalysis. Residues 80–81 (DG), His-85, 154–155 (ND), His-165, His-182, Asp-184, 195–200 (TAYALS), and Gln-254 contribute to the NAD(+) site.

It belongs to the NAD kinase family. A divalent metal cation serves as cofactor.

It is found in the cytoplasm. The enzyme catalyses NAD(+) + ATP = ADP + NADP(+) + H(+). In terms of biological role, involved in the regulation of the intracellular balance of NAD and NADP, and is a key enzyme in the biosynthesis of NADP. Catalyzes specifically the phosphorylation on 2'-hydroxyl of the adenosine moiety of NAD to yield NADP. The protein is NAD kinase of Acinetobacter baylyi (strain ATCC 33305 / BD413 / ADP1).